Consider the following 194-residue polypeptide: Imidazoleglycerol-phosphate dehydratase (194 aa).

This sequence belongs to the imidazoleglycerol-phosphate dehydratase family.

The protein localises to the cytoplasm. The enzyme catalyses D-erythro-1-(imidazol-4-yl)glycerol 3-phosphate = 3-(imidazol-4-yl)-2-oxopropyl phosphate + H2O. It participates in amino-acid biosynthesis; L-histidine biosynthesis; L-histidine from 5-phospho-alpha-D-ribose 1-diphosphate: step 6/9. In Thermus thermophilus (strain ATCC BAA-163 / DSM 7039 / HB27), this protein is Imidazoleglycerol-phosphate dehydratase.